We begin with the raw amino-acid sequence, 997 residues long: Translation initiation factor IF-2 (997 aa).

Residues 36–415 (SMAGSLTTEE…ATQPLKAAKR (380 aa)) form a disordered region. 2 stretches are compositionally biased toward basic and acidic residues: residues 45 to 65 (EAAR…ERSG) and 94 to 107 (AREE…EKPA). A compositionally biased stretch (low complexity) spans 108–126 (AVEAPAQAEPVAEAPAASP). Residues 127–147 (HKVEEKAAPEAAKAEPAEKAK) are compositionally biased toward basic and acidic residues. A compositionally biased stretch (low complexity) spans 151–162 (ARVVSAARVISR). Over residues 163-181 (PGEEEEKKPEPVVESKPEP) the composition is skewed to basic and acidic residues. Residues 182 to 196 (VAEISPVAAALAARE) show a composition bias toward low complexity. Basic and acidic residues-rich tracts occupy residues 197 to 214 (AAAR…EKGA) and 241 to 252 (PEARTEAWKDAD). Residues 300–309 (GRPGAPGGPR) are compositionally biased toward gly residues. Residues 316–335 (PPRPGGPRPSGPGGPRPAGG) show a composition bias toward pro residues. Positions 378-388 (GGRRDDDDSQR) are enriched in basic and acidic residues. Positions 390–399 (NRGKGRRKGG) are enriched in basic residues. Residues 496–665 (PRPPVVTIMG…ALQSEIMELK (170 aa)) form the tr-type G domain. The segment at 505–512 (GHVDHGKT) is G1. GTP is bound at residue 505–512 (GHVDHGKT). Residues 530-534 (GITQH) form a G2 region. The G3 stretch occupies residues 551-554 (DTPG). Residues 551-555 (DTPGH) and 605-608 (NKMD) each bind GTP. Residues 605–608 (NKMD) form a G4 region. Residues 641–643 (AAK) form a G5 region.

This sequence belongs to the TRAFAC class translation factor GTPase superfamily. Classic translation factor GTPase family. IF-2 subfamily.

It localises to the cytoplasm. Functionally, one of the essential components for the initiation of protein synthesis. Protects formylmethionyl-tRNA from spontaneous hydrolysis and promotes its binding to the 30S ribosomal subunits. Also involved in the hydrolysis of GTP during the formation of the 70S ribosomal complex. In Desulfovibrio desulfuricans (strain ATCC 27774 / DSM 6949 / MB), this protein is Translation initiation factor IF-2.